Here is a 415-residue protein sequence, read N- to C-terminus: Glutamyl-tRNA reductase (415 aa).

Residues 49-52 (TCNR), Ser104, 109-111 (EPQ), and Gln115 each bind substrate. The active-site Nucleophile is Cys50. An NADP(+)-binding site is contributed by 184-189 (GAGEMI).

This sequence belongs to the glutamyl-tRNA reductase family. In terms of assembly, homodimer.

It catalyses the reaction (S)-4-amino-5-oxopentanoate + tRNA(Glu) + NADP(+) = L-glutamyl-tRNA(Glu) + NADPH + H(+). The protein operates within porphyrin-containing compound metabolism; protoporphyrin-IX biosynthesis; 5-aminolevulinate from L-glutamyl-tRNA(Glu): step 1/2. Its function is as follows. Catalyzes the NADPH-dependent reduction of glutamyl-tRNA(Glu) to glutamate 1-semialdehyde (GSA). The chain is Glutamyl-tRNA reductase from Neisseria gonorrhoeae (strain ATCC 700825 / FA 1090).